The primary structure comprises 235 residues: MDPARPLGLSILLLFLTEAALGDAAQEPTGNNAEICLLPLDYGPCRALLLRYYYDRYTQSCRQFLYGGCEGNANNFYTWEACDDACWRIEKVPKVCRLQVSVDDQCEGSTEKYFFNLSSMTCEKFFSGGCHRNRIENRFPDEATCMGFCAPKKIPSFCYSPKDEGLCSANVTRYYFNPRYRTCDAFTYTGCGGNDNNFVSREDCKRACAKALKKKKKMPKLRFASRIRKIRKKQF.

The first 22 residues, 1 to 22, serve as a signal peptide directing secretion; it reads MDPARPLGLSILLLFLTEAALG. BPTI/Kunitz inhibitor domains are found at residues 36–86, 96–149, and 158–208; these read CLLP…DDAC, CRLQ…MGFC, and CYSP…KRAC. 9 cysteine pairs are disulfide-bonded: Cys36–Cys86, Cys45–Cys69, Cys61–Cys82, Cys96–Cys149, Cys106–Cys130, Cys122–Cys145, Cys158–Cys208, Cys167–Cys191, and Cys183–Cys204. N-linked (GlcNAc...) asparagine glycosylation occurs at Asn116. An N-linked (GlcNAc...) asparagine glycan is attached at Asn170.

As to quaternary structure, finds in a complex with ABCB1, TFPI2 and PPP2R3C; leading to the dephosphorylation of ABCB1. In terms of tissue distribution, umbilical vein endothelial cells, liver, placenta, heart, pancreas, and maternal serum at advanced pregnancy.

Its subcellular location is the secreted. Functionally, may play a role in the regulation of plasmin-mediated matrix remodeling. Inhibits trypsin, plasmin, factor VIIa/tissue factor and weakly factor Xa. Has no effect on thrombin. The chain is Tissue factor pathway inhibitor 2 (TFPI2) from Homo sapiens (Human).